We begin with the raw amino-acid sequence, 967 residues long: RNA polymerase-associated protein RapA (967 aa).

Positions 163–333 (EVGQRHAPRV…FARLRLLDPN (171 aa)) constitute a Helicase ATP-binding domain. An ATP-binding site is contributed by 176 to 183 (DEVGLGKT). The short motif at 279–282 (DEAH) is the DEAH box element. The region spanning 489–677 (RVEWLLNYLT…TCRQQHDSLK (189 aa)) is the Helicase C-terminal domain.

Belongs to the SNF2/RAD54 helicase family. RapA subfamily. Interacts with the RNAP. Has a higher affinity for the core RNAP than for the holoenzyme. Its ATPase activity is stimulated by binding to RNAP.

In terms of biological role, transcription regulator that activates transcription by stimulating RNA polymerase (RNAP) recycling in case of stress conditions such as supercoiled DNA or high salt concentrations. Probably acts by releasing the RNAP, when it is trapped or immobilized on tightly supercoiled DNA. Does not activate transcription on linear DNA. Probably not involved in DNA repair. The polypeptide is RNA polymerase-associated protein RapA (Pectobacterium atrosepticum (strain SCRI 1043 / ATCC BAA-672) (Erwinia carotovora subsp. atroseptica)).